Reading from the N-terminus, the 505-residue chain is MEDDDFSIKDKKENYETCSTETISSYISINEKCQLIEKDINDDNHENPYMIFNKISSSLIAMLQGVEVLCNLSIIYLLKDNYHLHPASLSIVMCFIKIPWSIKLVWAVISDNYPIFGYRRKYYLLLGSFLCILSLICLGLITHNNLFITILLLFIYFFGSSLCNVIGEAQVVESNRNCSINSSARNVSLFFAFRKLSFAIMSYLSGYLLLLISKKHIFLIGSFLPICVFTSGFFIIEKRNYTKSSIKDQIKCIYSIIKLSYLKNFIIFIFIMMSTPSCGNTLFFYITNELKFSPNLLGKMAMFQSLASFISIISYMLFFTKIDIRKLLLYSTIIITPFCLLPLVVIKKVNYFLFIPNTLFFITDTVLIEFIAEFQTMPILVLCSRLIPEGFESTIYSLLLSSNNFASIISSFLSSLLTYSLNITSTNFTNLPYMIIICCLTNIIPIFFLYILPNHSQKKNLQHSNSHTQKYYSYPSTDYISSQKSDSSEITKFSADMQIDDITLE.

4 helical membrane passes run 58 to 78 (SLIA…IYLL), 89 to 109 (LSIV…WAVI), 122 to 142 (YYLL…GLIT), and 146 to 166 (LFIT…CNVI). 3 N-linked (GlcNAc...) asparagine glycosylation sites follow: Asn177, Asn181, and Asn186. A run of 2 helical transmembrane segments spans residues 192–212 (AFRK…LLLI) and 216–236 (HIFL…FFII). N-linked (GlcNAc...) asparagine glycosylation is present at Asn240. Helical transmembrane passes span 266-286 (IIFI…FFYI), 300-320 (MAMF…LFFT), 326-346 (KLLL…LVVI), 352-372 (FLFI…EFIA), and 405-425 (FASI…NITS). Residue Asn427 is glycosylated (N-linked (GlcNAc...) asparagine). Residues 431–451 (LPYMIIICCLTNIIPIFFLYI) traverse the membrane as a helical segment. An N-linked (GlcNAc...) asparagine glycan is attached at Asn454.

It belongs to the major facilitator superfamily. Folate-biopterin transporter (TC 2.A.71) family.

Its subcellular location is the cell membrane. It catalyses the reaction folate(in) + H(+)(in) = folate(out) + H(+)(out). With respect to regulation, transport of folates is inhibited by probenecid and methotrexate. In terms of biological role, folate transporter with broad substrate specificity. Transports folic acid, folinic acid, pteroic acid, dihydropteroic acid, the folate precursor p-amino benzoic acid (pABA) and the human folate catabolite pABA monoglutamate. This is Folate transporter 1 from Plasmodium falciparum (isolate 3D7).